Here is a 523-residue protein sequence, read N- to C-terminus: Ribosomal protein uS12 methylthiotransferase RimO (523 aa).

An MTTase N-terminal domain is found at 7–134; the sequence is RRVALITLGC…IATHLAAVLA (128 aa). Positions 16, 52, 97, 192, 196, and 199 each coordinate [4Fe-4S] cluster. The Radical SAM core domain maps to 178 to 409; the sequence is LTAGPVAVLK…DLVEQLTAAR (232 aa). In terms of domain architecture, TRAM spans 411–492; the sequence is DARIGSRVQV…GVDLIAEFIA (82 aa).

It belongs to the methylthiotransferase family. RimO subfamily. [4Fe-4S] cluster serves as cofactor.

The protein localises to the cytoplasm. It carries out the reaction L-aspartate(89)-[ribosomal protein uS12]-hydrogen + (sulfur carrier)-SH + AH2 + 2 S-adenosyl-L-methionine = 3-methylsulfanyl-L-aspartate(89)-[ribosomal protein uS12]-hydrogen + (sulfur carrier)-H + 5'-deoxyadenosine + L-methionine + A + S-adenosyl-L-homocysteine + 2 H(+). In terms of biological role, catalyzes the methylthiolation of an aspartic acid residue of ribosomal protein uS12. The chain is Ribosomal protein uS12 methylthiotransferase RimO from Frankia casuarinae (strain DSM 45818 / CECT 9043 / HFP020203 / CcI3).